Reading from the N-terminus, the 243-residue chain is Carboxy-S-adenosyl-L-methionine synthase (243 aa).

S-adenosyl-L-methionine-binding positions include Tyr-40, Gly-65–Ser-67, Asp-90–Asn-91, Asp-118–Ile-119, Asn-133, and Arg-200.

The protein belongs to the class I-like SAM-binding methyltransferase superfamily. Cx-SAM synthase family. Homodimer.

It catalyses the reaction prephenate + S-adenosyl-L-methionine = carboxy-S-adenosyl-L-methionine + 3-phenylpyruvate + H2O. Its function is as follows. Catalyzes the conversion of S-adenosyl-L-methionine (SAM) to carboxy-S-adenosyl-L-methionine (Cx-SAM). The polypeptide is Carboxy-S-adenosyl-L-methionine synthase (Shewanella sp. (strain MR-7)).